Here is a 526-residue protein sequence, read N- to C-terminus: Adenylyl cyclase-associated protein (526 aa).

The adenyl cyclase-binding stretch occupies residues 1 to 168 (MPDSKYTMQG…RQSKYFAYLS (168 aa)). 3 disordered regions span residues 43 to 72 (EASK…PEVE), 255 to 304 (QSTK…DANK), and 326 to 371 (KVDK…RPPR). The span at 45-64 (SKNNKPSDSGADANTTNEPS) shows a compositional bias: polar residues. Positions 169 to 369 (ALSEGAPLFS…KPSTLKTKRP (201 aa)) match the SH3-binding motif. A compositionally biased stretch (low complexity) spans 262-274 (ATSSPSPASATAA). The segment covering 275–285 (PAPPPPPPAPP) has biased composition (pro residues). The segment covering 290–302 (EISNDTPATSSDA) has biased composition (polar residues). Basic and acidic residues predominate over residues 326-338 (KVDKSQQTHKNPE). Residues 342-352 (SSTVSSTGSKS) show a composition bias toward low complexity. Positions 354 to 361 (PPPRPKKP) are interaction with SH3 domain of ABP1. The segment covering 357 to 370 (RPKKPSTLKTKRPP) has biased composition (basic residues). The C-CAP/cofactor C-like domain occupies 369-504 (PPRKELVGNK…EDDDYVEFPI (136 aa)). A dimerization and actin-binding region spans residues 370–526 (PRKELVGNKW…FKSAVFEHAG (157 aa)). The residue at position 454 (Ser-454) is a Phosphoserine.

It belongs to the CAP family. In terms of assembly, homodimer.

The protein resides in the cytoplasm. It is found in the cytoskeleton. The protein localises to the actin patch. The N-terminal domain binds to adenylyl cyclase, thereby enabling adenylyl cyclase to be activated by upstream regulatory signals, such as Ras. The C-terminal domain is required for normal cellular morphology and growth control. The sequence is that of Adenylyl cyclase-associated protein (SRV2) from Saccharomyces cerevisiae (strain ATCC 204508 / S288c) (Baker's yeast).